The sequence spans 688 residues: Translation initiation factor IF-2 (688 aa).

A compositionally biased stretch (basic and acidic residues) spans 50–62 (LLSGKEKSEKTKE). Residues 50-95 (LLSGKEKSEKTKEEDDEIETTAKNPIKESINNKKSNKRDDKKEKVN) form a disordered region. Positions 72 to 82 (KNPIKESINNK) are enriched in low complexity. A compositionally biased stretch (basic and acidic residues) spans 86-95 (KRDDKKEKVN). Residues 187–354 (KRSPIITVMG…MILLSSEILE (168 aa)) enclose the tr-type G domain. The tract at residues 196-203 (GHVDHGKT) is G1. 196 to 203 (GHVDHGKT) contributes to the GTP binding site. The G2 stretch occupies residues 221-225 (GITQH). The interval 242–245 (DTPG) is G3. GTP contacts are provided by residues 242-246 (DTPGH) and 296-299 (NKID). The tract at residues 296–299 (NKID) is G4. Positions 332-334 (SAH) are G5.

This sequence belongs to the TRAFAC class translation factor GTPase superfamily. Classic translation factor GTPase family. IF-2 subfamily.

It is found in the cytoplasm. Its function is as follows. One of the essential components for the initiation of protein synthesis. Protects formylmethionyl-tRNA from spontaneous hydrolysis and promotes its binding to the 30S ribosomal subunits. Also involved in the hydrolysis of GTP during the formation of the 70S ribosomal complex. The protein is Translation initiation factor IF-2 of Clostridium botulinum (strain 657 / Type Ba4).